A 348-amino-acid chain; its full sequence is Spermidine/putrescine import ATP-binding protein PotA (348 aa).

In terms of domain architecture, ABC transporter spans 6–236 (IRLVNVTKEY…PKNVFVADFI (231 aa)). 38–45 (GPSGCGKT) is a binding site for ATP.

This sequence belongs to the ABC transporter superfamily. Spermidine/putrescine importer (TC 3.A.1.11.1) family. As to quaternary structure, the complex is composed of two ATP-binding proteins (PotA), two transmembrane proteins (PotB and PotC) and a solute-binding protein (PotD).

The protein resides in the cell membrane. The catalysed reaction is ATP + H2O + polyamine-[polyamine-binding protein]Side 1 = ADP + phosphate + polyamineSide 2 + [polyamine-binding protein]Side 1.. Functionally, part of the ABC transporter complex PotABCD involved in spermidine/putrescine import. Responsible for energy coupling to the transport system. The sequence is that of Spermidine/putrescine import ATP-binding protein PotA from Desulfitobacterium hafniense (strain Y51).